A 189-amino-acid polypeptide reads, in one-letter code: Adenylate kinase (189 aa).

ATP is bound at residue 11-16 (GSGKGT). The segment at 31 to 60 (STGDVLRAEIKNGTELGKTAKGYIDQGQLI) is NMP. Residues Thr32, Arg37, 58-60 (QLI), 86-89 (GFPR), and Gln93 each bind AMP. The segment at 127 to 137 (KRGKESGRADD) is LID. Arg128 provides a ligand contact to ATP. AMP-binding residues include Arg134 and Arg145. Gly173 contributes to the ATP binding site.

Belongs to the adenylate kinase family. Monomer.

The protein localises to the cytoplasm. The enzyme catalyses AMP + ATP = 2 ADP. Its pathway is purine metabolism; AMP biosynthesis via salvage pathway; AMP from ADP: step 1/1. Its function is as follows. Catalyzes the reversible transfer of the terminal phosphate group between ATP and AMP. Plays an important role in cellular energy homeostasis and in adenine nucleotide metabolism. The chain is Adenylate kinase from Bacteroides fragilis (strain ATCC 25285 / DSM 2151 / CCUG 4856 / JCM 11019 / LMG 10263 / NCTC 9343 / Onslow / VPI 2553 / EN-2).